Consider the following 79-residue polypeptide: NADH-ubiquinone oxidoreductase chain 4 (79 aa).

2 consecutive transmembrane segments (helical) span residues 24–44 (SYTLMIAHGLCSSGLFCLANI) and 54–74 (LLINKGLLNFMPSLSLWWFLL).

Belongs to the complex I subunit 4 family.

The protein localises to the mitochondrion membrane. The enzyme catalyses a ubiquinone + NADH + 5 H(+)(in) = a ubiquinol + NAD(+) + 4 H(+)(out). In terms of biological role, core subunit of the mitochondrial membrane respiratory chain NADH dehydrogenase (Complex I) that is believed to belong to the minimal assembly required for catalysis. Complex I functions in the transfer of electrons from NADH to the respiratory chain. The immediate electron acceptor for the enzyme is believed to be ubiquinone. The sequence is that of NADH-ubiquinone oxidoreductase chain 4 (ND4) from Simulium vittatum (Striped black fly).